A 180-amino-acid chain; its full sequence is UPF0227 protein YcfP (180 aa).

Belongs to the UPF0227 family.

This chain is UPF0227 protein YcfP, found in Escherichia coli O7:K1 (strain IAI39 / ExPEC).